The primary structure comprises 241 residues: 1-(5-phosphoribosyl)-5-[(5-phosphoribosylamino)methylideneamino] imidazole-4-carboxamide isomerase (241 aa).

The active-site Proton acceptor is the Asp7. Asp129 serves as the catalytic Proton donor.

It belongs to the HisA/HisF family.

The protein resides in the cytoplasm. It carries out the reaction 1-(5-phospho-beta-D-ribosyl)-5-[(5-phospho-beta-D-ribosylamino)methylideneamino]imidazole-4-carboxamide = 5-[(5-phospho-1-deoxy-D-ribulos-1-ylimino)methylamino]-1-(5-phospho-beta-D-ribosyl)imidazole-4-carboxamide. It functions in the pathway amino-acid biosynthesis; L-histidine biosynthesis; L-histidine from 5-phospho-alpha-D-ribose 1-diphosphate: step 4/9. This chain is 1-(5-phosphoribosyl)-5-[(5-phosphoribosylamino)methylideneamino] imidazole-4-carboxamide isomerase, found in Buchnera aphidicola subsp. Baizongia pistaciae (strain Bp).